A 964-amino-acid polypeptide reads, in one-letter code: Fanconi-associated nuclease 1 homolog (964 aa).

The tract at residues Ser31–Asp56 is disordered. Residues Trp63–Thr92 form a UBZ4-type zinc finger. Residues Cys66, Cys69, His83, and Cys87 each contribute to the Zn(2+) site. Residues Glu786, Asp907, Glu926, and Val927 each coordinate Mn(2+). In terms of domain architecture, VRR-NUC spans Gly844 to Ser958.

Belongs to the FAN1 family. Requires Mn(2+) as cofactor. Mg(2+) serves as cofactor.

It catalyses the reaction Hydrolytically removes 5'-nucleotides successively from the 3'-hydroxy termini of 3'-hydroxy-terminated oligonucleotides.. Functionally, nuclease required for the repair of DNA interstrand cross-links (ICL). Acts as a 5'-3' exonuclease that anchors at a cut end of DNA and cleaves DNA successively at every third nucleotide, allowing to excise an ICL from one strand through flanking incisions. This chain is Fanconi-associated nuclease 1 homolog, found in Oryza sativa subsp. japonica (Rice).